A 148-amino-acid polypeptide reads, in one-letter code: Cuticle protein 8 (148 aa).

A run of 5 repeats spans residues 16–19, alanine 22, 28–31, 37–40, and 44–47. The Chitin-binding type R&amp;R domain maps to 58-128; sequence YPKYEFNYGV…RTPGTHPVAV (71 aa).

Functionally, component of the cuticle of migratory locust which contains more than 100 different structural proteins. The chain is Cuticle protein 8 from Locusta migratoria (Migratory locust).